We begin with the raw amino-acid sequence, 76 residues long: Exodeoxyribonuclease 7 small subunit (76 aa).

The protein belongs to the XseB family. As to quaternary structure, heterooligomer composed of large and small subunits.

Its subcellular location is the cytoplasm. The catalysed reaction is Exonucleolytic cleavage in either 5'- to 3'- or 3'- to 5'-direction to yield nucleoside 5'-phosphates.. Bidirectionally degrades single-stranded DNA into large acid-insoluble oligonucleotides, which are then degraded further into small acid-soluble oligonucleotides. This Staphylococcus aureus (strain Mu3 / ATCC 700698) protein is Exodeoxyribonuclease 7 small subunit.